The primary structure comprises 187 residues: Tumor necrosis factor ligand superfamily member 4 (187 aa).

Residues methionine 1–lysine 23 lie on the Cytoplasmic side of the membrane. A helical; Signal-anchor for type II membrane protein membrane pass occupies residues leucine 24–cysteine 44. Topologically, residues glutamine 45 to proline 187 are extracellular. The region spanning proline 58–isoleucine 177 is the THD domain. 2 cysteine pairs are disulfide-bonded: cysteine 74–cysteine 164 and cysteine 101–cysteine 185. Asparagine 94 and asparagine 156 each carry an N-linked (GlcNAc...) asparagine glycan.

Belongs to the tumor necrosis factor family. Homotrimer.

The protein resides in the membrane. Cytokine that binds to TNFRSF4. Co-stimulates T-cell proliferation and cytokine production. This is Tumor necrosis factor ligand superfamily member 4 (TNFSF4) from Oryctolagus cuniculus (Rabbit).